We begin with the raw amino-acid sequence, 269 residues long: Ethylene-responsive transcription factor ERN1 (269 aa).

Polar residues predominate over residues 1–15 (MEIQFQQPNLQQHQK). Disordered regions lie at residues 1–36 (MEIQ…NKFV) and 128–157 (DVPA…LSSG). The AP2/ERF DNA-binding region spans 34–91 (KFVGVRQRPSGRWVAEIKDTTQKIRMWLGTFETAEEAARAYDEAACLLRGSNTRTNFI). Residues 128–146 (DVPAPSASTTSTSSNTSNS) show a composition bias toward low complexity.

The protein belongs to the AP2/ERF transcription factor family. ERF subfamily.

Its subcellular location is the nucleus. Transcription factor involved in the symbiotic nodule signaling pathway in response to rhizobial stimulation. Functions as a transcriptional regulator required for root infection by symbiotic rhizobia, infection thread (IT) formation, and nodule development. May coordinate these processes. Functions downstream of the CCAMK-CYCLOPS complex. Probably not involved in arbuscular mycorrhizal (AM) symbiosis. This is Ethylene-responsive transcription factor ERN1 from Lotus japonicus (Lotus corniculatus var. japonicus).